The chain runs to 154 residues: MMTYEGKLIAEGLKFGIVAARFNEFITNKLVGGALDALLRHGVAESDIEIAWVPGAFEIPLVAQKMAETKKYDAIICLGAVIRGATPHFDFVSAEVSKGVAHVGLETKLPVVFGVLTTDTIEQAIERAGTKAGNKGFDSAITAIETVNLLKMIQ.

5-amino-6-(D-ribitylamino)uracil-binding positions include Phe-22, 56-58, and 80-82; these read AFE and AVI. 85-86 serves as a coordination point for (2S)-2-hydroxy-3-oxobutyl phosphate; sequence AT. Residue His-88 is the Proton donor of the active site. Phe-113 lines the 5-amino-6-(D-ribitylamino)uracil pocket. Arg-127 contributes to the (2S)-2-hydroxy-3-oxobutyl phosphate binding site.

It belongs to the DMRL synthase family.

It carries out the reaction (2S)-2-hydroxy-3-oxobutyl phosphate + 5-amino-6-(D-ribitylamino)uracil = 6,7-dimethyl-8-(1-D-ribityl)lumazine + phosphate + 2 H2O + H(+). The protein operates within cofactor biosynthesis; riboflavin biosynthesis; riboflavin from 2-hydroxy-3-oxobutyl phosphate and 5-amino-6-(D-ribitylamino)uracil: step 1/2. Its function is as follows. Catalyzes the formation of 6,7-dimethyl-8-ribityllumazine by condensation of 5-amino-6-(D-ribitylamino)uracil with 3,4-dihydroxy-2-butanone 4-phosphate. This is the penultimate step in the biosynthesis of riboflavin. The polypeptide is 6,7-dimethyl-8-ribityllumazine synthase (Desulfitobacterium hafniense (strain DSM 10664 / DCB-2)).